A 191-amino-acid chain; its full sequence is Large ribosomal subunit protein uL6 (191 aa).

This sequence belongs to the universal ribosomal protein uL6 family. In terms of assembly, part of the 50S ribosomal subunit.

Its function is as follows. This protein binds to the 23S rRNA, and is important in its secondary structure. It is located near the subunit interface in the base of the L7/L12 stalk, and near the tRNA binding site of the peptidyltransferase center. This is Large ribosomal subunit protein uL6 from Cyanothece sp. (strain PCC 7425 / ATCC 29141).